We begin with the raw amino-acid sequence, 354 residues long: Uroporphyrinogen decarboxylase (354 aa).

Substrate-binding positions include 27–31 (RQAGR), Phe46, Asp77, Tyr154, Thr209, and His327.

This sequence belongs to the uroporphyrinogen decarboxylase family. As to quaternary structure, homodimer.

The protein localises to the cytoplasm. It catalyses the reaction uroporphyrinogen III + 4 H(+) = coproporphyrinogen III + 4 CO2. The protein operates within porphyrin-containing compound metabolism; protoporphyrin-IX biosynthesis; coproporphyrinogen-III from 5-aminolevulinate: step 4/4. Its function is as follows. Catalyzes the decarboxylation of four acetate groups of uroporphyrinogen-III to yield coproporphyrinogen-III. This Escherichia coli O157:H7 protein is Uroporphyrinogen decarboxylase.